The sequence spans 193 residues: Phosphatidylglycerophosphatase and protein-tyrosine phosphatase 1 (193 aa).

The transit peptide at 1-31 directs the protein to the mitochondrion; the sequence is MAASAWLEAGLARVLFYPTLLYTVFRGRVRG. Residues 37–188 form the Tyrosine-protein phosphatase domain; sequence WYHRIDHTVL…LKEFHKEITA (152 aa). At K85 the chain carries N6-succinyllysine. The Phosphocysteine intermediate role is filled by C132.

This sequence belongs to the protein-tyrosine phosphatase family. Non-receptor class dual specificity subfamily. In terms of assembly, interacts with STYXL1; the interaction inhibits PTPMT1 catalytic activity. As to expression, predominantly expressed in testis. Expressed at lower level in heart, brain, spleen, lung, liver, skeletal muscle, kidney, bone marrow, eye, lymph node, smooth muscle, prostate, thymus, stomach and uterus.

It is found in the mitochondrion inner membrane. It catalyses the reaction a 1,2-diacyl-sn-glycero-3-phospho-(1'-sn-glycero-3'-phosphate) + H2O = a 1,2-diacyl-sn-glycero-3-phospho-(1'-sn-glycerol) + phosphate. It carries out the reaction O-phospho-L-tyrosyl-[protein] + H2O = L-tyrosyl-[protein] + phosphate. The enzyme catalyses O-phospho-L-seryl-[protein] + H2O = L-seryl-[protein] + phosphate. The catalysed reaction is O-phospho-L-threonyl-[protein] + H2O = L-threonyl-[protein] + phosphate. It catalyses the reaction 1,2-di-(9Z-octadecenoyl)-sn-glycero-3-phospho-(1'-sn-glycerol-3'-phosphate) + H2O = 1,2-di-(9Z-octadecenoyl)-sn-glycero-3-phospho-(1'-sn-glycerol) + phosphate. It carries out the reaction 1,2-dioctanoyl-sn-glycero-3-phospho-(1D-myo-inositol-5-phosphate) + H2O = 1,2-dioctanoyl-sn-glycero-3-phospho-(1D-myo-inositol) + phosphate. The enzyme catalyses a 1-acyl-2-hexanoyl-sn-glycero-3-phospho-(1D-myo-inositol-5-phosphate) + H2O = a 1-acyl-2-hexanoyl-sn-glycero-3-phospho-(1D-myo-inositol) + phosphate. The catalysed reaction is 1,2-dibutyryl-sn-glycero-3-phospho-(1D-myo-inositol-5-phosphate) + H2O = 1,2-dibutyryl-sn-glycero-3-phospho-(1D-myo-inositol) + phosphate. It participates in phospholipid metabolism; phosphatidylglycerol biosynthesis; phosphatidylglycerol from CDP-diacylglycerol: step 2/2. In terms of biological role, lipid phosphatase which dephosphorylates phosphatidylglycerophosphate (PGP) to phosphatidylglycerol (PG). PGP is an essential intermediate in the biosynthetic pathway of cardiolipin, a mitochondrial-specific phospholipid regulating the membrane integrity and activities of the organelle. Has also been shown to display phosphatase activity toward phosphoprotein substrates, specifically mediates dephosphorylation of mitochondrial proteins, thereby playing an essential role in ATP production. Has probably a preference for proteins phosphorylated on Ser and/or Thr residues compared to proteins phosphorylated on Tyr residues. Probably involved in regulation of insulin secretion in pancreatic beta cells. May prevent intrinsic apoptosis, probably by regulating mitochondrial membrane integrity. The polypeptide is Phosphatidylglycerophosphatase and protein-tyrosine phosphatase 1 (Mus musculus (Mouse)).